Consider the following 331-residue polypeptide: L-lactate dehydrogenase A chain (331 aa).

NAD(+) contacts are provided by residues G29–K57 and R98. Residues R105, N137, and R168 each contribute to the substrate site. Residue N137 participates in NAD(+) binding. The active-site Proton acceptor is H192. T247 serves as a coordination point for substrate.

Belongs to the LDH/MDH superfamily. LDH family. As to quaternary structure, homotetramer.

The protein resides in the cytoplasm. It carries out the reaction (S)-lactate + NAD(+) = pyruvate + NADH + H(+). The protein operates within fermentation; pyruvate fermentation to lactate; (S)-lactate from pyruvate: step 1/1. Functionally, interconverts simultaneously and stereospecifically pyruvate and lactate with concomitant interconversion of NADH and NAD(+). This Notothenia angustata (Rockcod) protein is L-lactate dehydrogenase A chain (ldha).